Consider the following 71-residue polypeptide: uncharacterized protein (71 aa).

This is an uncharacterized protein from Acheta domesticus (House cricket).